The sequence spans 160 residues: Endoribonuclease YbeY (160 aa).

Zn(2+) is bound by residues His-118, His-122, and His-128.

Belongs to the endoribonuclease YbeY family. The cofactor is Zn(2+).

The protein localises to the cytoplasm. Its function is as follows. Single strand-specific metallo-endoribonuclease involved in late-stage 70S ribosome quality control and in maturation of the 3' terminus of the 16S rRNA. The polypeptide is Endoribonuclease YbeY (Treponema pallidum (strain Nichols)).